Consider the following 354-residue polypeptide: MSEQKKRLLVMAGGTGGHVFPAIAVAQYLQQQGWDICWLGTADRMEAQLVPKHHIPIQFIQISGLRGKGIKALLSAPFSIFRAILQARKIIKAYQPHAVLGMGGYVSGPGGIAAKLCGIPVILHEQNAVAGLTNSWLAKIARRVLQAFPTAFPNAEVVGNPVRQTLFSQPTPEQRFAGREGKLRVLVVGGSQGARVLNQTLPNVVAQLSDKLEVRHQVGQGAVEQVTTLYPEHASVTITEFIDNMADAYAWADIVICRSGALTVSELAAVGAAAIFVPFQHKDQQQYLNAKYLADAGAATIIPQAELTAEKLVSVLTQFDRETLQQMAIKAKAMATPLAAQRVAEVIIEEANQD.

UDP-N-acetyl-alpha-D-glucosamine contacts are provided by residues 15–17 (TGG), N127, R163, S191, I242, 261–266 (ALTVSE), and Q286.

This sequence belongs to the glycosyltransferase 28 family. MurG subfamily.

It localises to the cell inner membrane. The enzyme catalyses di-trans,octa-cis-undecaprenyl diphospho-N-acetyl-alpha-D-muramoyl-L-alanyl-D-glutamyl-meso-2,6-diaminopimeloyl-D-alanyl-D-alanine + UDP-N-acetyl-alpha-D-glucosamine = di-trans,octa-cis-undecaprenyl diphospho-[N-acetyl-alpha-D-glucosaminyl-(1-&gt;4)]-N-acetyl-alpha-D-muramoyl-L-alanyl-D-glutamyl-meso-2,6-diaminopimeloyl-D-alanyl-D-alanine + UDP + H(+). The protein operates within cell wall biogenesis; peptidoglycan biosynthesis. Functionally, cell wall formation. Catalyzes the transfer of a GlcNAc subunit on undecaprenyl-pyrophosphoryl-MurNAc-pentapeptide (lipid intermediate I) to form undecaprenyl-pyrophosphoryl-MurNAc-(pentapeptide)GlcNAc (lipid intermediate II). The chain is UDP-N-acetylglucosamine--N-acetylmuramyl-(pentapeptide) pyrophosphoryl-undecaprenol N-acetylglucosamine transferase from Pasteurella multocida (strain Pm70).